Here is a 446-residue protein sequence, read N- to C-terminus: Exodeoxyribonuclease 7 large subunit (446 aa).

Belongs to the XseA family. In terms of assembly, heterooligomer composed of large and small subunits.

Its subcellular location is the cytoplasm. It catalyses the reaction Exonucleolytic cleavage in either 5'- to 3'- or 3'- to 5'-direction to yield nucleoside 5'-phosphates.. In terms of biological role, bidirectionally degrades single-stranded DNA into large acid-insoluble oligonucleotides, which are then degraded further into small acid-soluble oligonucleotides. The protein is Exodeoxyribonuclease 7 large subunit of Xanthomonas campestris pv. campestris (strain B100).